Here is a 141-residue protein sequence, read N- to C-terminus: Large ribosomal subunit protein uL11 (141 aa).

It belongs to the universal ribosomal protein uL11 family. Part of the ribosomal stalk of the 50S ribosomal subunit. Interacts with L10 and the large rRNA to form the base of the stalk. L10 forms an elongated spine to which L12 dimers bind in a sequential fashion forming a multimeric L10(L12)X complex. One or more lysine residues are methylated.

Its function is as follows. Forms part of the ribosomal stalk which helps the ribosome interact with GTP-bound translation factors. The sequence is that of Large ribosomal subunit protein uL11 from Campylobacter fetus subsp. fetus (strain 82-40).